The primary structure comprises 386 residues: 2,3-diketo-5-methylthiopentyl-1-phosphate enolase (386 aa).

Lysine 85 serves as the catalytic Proton acceptor. Substrate-binding positions include lysine 131, lysine 157–glutamate 160, histidine 248, glycine 316, and glycine 338–threonine 339. Mg(2+) is bound by residues lysine 157, aspartate 159, and glutamate 160. An N6-carboxylysine modification is found at lysine 157.

Belongs to the RuBisCO large chain family. Type IV subfamily. Homodimer. The cofactor is Mg(2+).

It catalyses the reaction 5-methylsulfanyl-2,3-dioxopentyl phosphate = 2-hydroxy-5-methylsulfanyl-3-oxopent-1-enyl phosphate. It participates in amino-acid biosynthesis; L-methionine biosynthesis via salvage pathway; L-methionine from S-methyl-5-thio-alpha-D-ribose 1-phosphate: step 3/6. Catalyzes the enolization of 2,3-diketo-5-methylthiopentyl-1-phosphate (DK-MTP-1-P) into 2-hydroxy-3-keto-5-methylthiopentenyl-1-phosphate (HK-MTPenyl-1-P). This Microcystis aeruginosa (strain NIES-843 / IAM M-2473) protein is 2,3-diketo-5-methylthiopentyl-1-phosphate enolase.